The chain runs to 762 residues: Probable inorganic carbon transporter subunit DabA (762 aa).

Residues C279, D281, H461, and C476 each contribute to the Zn(2+) site.

Belongs to the inorganic carbon transporter (TC 9.A.2) DabA family. In terms of assembly, forms a complex with DabB. Zn(2+) is required as a cofactor.

It localises to the cell inner membrane. Its function is as follows. Part of an energy-coupled inorganic carbon pump. This chain is Probable inorganic carbon transporter subunit DabA, found in Legionella pneumophila (strain Lens).